The following is a 1495-amino-acid chain: MSEELALENLEHVETSVPHTVFSHANSAPRGKFRSLTLINWNGFFARTFDLDELVTTLSGGNGAGKSTTMAGFVTALIPDLTLLHFRNTTEAGATSGSRDKGLHGKLRPGVCYAALDTINSRNQRVIVGARLQQVAGRDKKVDIKTFSIQGLNLAENPTTIFTDVVNERQARVLTLNELKEKIEQAGAQFKQYHSITDYHAMMFDLGIIPKRLRSSSDRSKFYKLIEASLYGGISSAITRSLRDYLLPENLGVRKAFQDMESALRENRMTLEAIKVTQADRDLFKHLITETSNYVASDYMRHANERRGNIESAVRFRQDWYRARTEQHLSQQRLVELSREAAELAENEKTLEVDHQSAVDYLNLVLNALRHQEKIARYQDDVAEITARLEEQKMVVETATEQLEESQVQVEQVEQEVDQIRAQLADYQQALDAQQTRALQYQQAIAALEKAKTLCGLADLGVKNVEAYHDEFAAHAESLTEQVLELEQRMSISDAAKSQFDKAYQLVCKVAGEIPRSTAFEQAKVLLRDYPTQKVQAQQTSQLRAKLHELEQRYAQQQSAVRLLKEFNQRANVSLEDAEALEAYHAEQEALLEDVSAELSEQVEQRSTLRQKREQLSALYQDNAKKAPAWLTAQAALERLQDQSGETFADSQDVMQFMQAQLVKERELTIERDQLEQQRQQLEAQISRLSQPDGSEDARLNVLAERFGGVLLSELYDDVPIEDAPYFSALYGPARHAIVVRDLDAVKGQLAQLEECPDDLYLIEGDPTAFDDSVLSAQELAHGVVVQVSDRELRYSKFPEIPLFGRAAREQYLEALQQQRDDVTEQHAQRAFDVQKCQRLHEHFSQFVGLHLALAFQPNPEDVMAEIQQQRNEIERELNQFVTTEQQLRIQLDYAKEKMQLLNKLIPQLNLIADESLIDRVEECREQLDIAEQDELFIRQYGATLSQLEPIANTLQSDPEHYERLKADYEQAISQQKQVQQRLFALADVLQRKAHFAYEERVQTENTDLNEQLRAKLDSLQQQREVQKAQLQQKQQQFTNYNRVYIELQTSFNNKMQMLQELLQEVGELGVRADQGAEERAKQRRDELHQVLSDTRQRRHYVEKQLTLIESEAQSLNARIRKAERDYKTQRELVVAAKVSWCVVMRLSRGSDVEKRLNRREFAYLSADELRSMSDKALGALRTAVADNEYLRDSLRLSEDNRKPENKVRFFIAVYQHLRERIRQDIIKTDDPIDAIEQMEIELSRLTDELTRREQKLAISSESVANIMRKTIQREQNRIRMLNQGLQNIAFGQVKSVRLVVNIRDTHAMLLDALSGTQEEYQDLFTDQRMTFSEAIAKLYQRLNPHIDMGQRTAQTIGEELLDYRNYLDLEVEVYRGADGWLRAESGALSTGEAIGTGMSILLMVVQSWEEESRRIRGKDIVPCRLLFLDEAARLDAKSISTLFELCERLDMQLLIAAPENISPEKGTTYKLVRKIAGNQEHVHVVGLRGFGATA.

ATP is bound at residue 60–67; the sequence is GGNGAGKS. 3 coiled-coil regions span residues 322-693, 861-1140, and 1233-1289; these read RART…SQPD, EDVM…AKVS, and IDAI…LQNI. The segment at 692–809 is flexible hinge; that stretch reads PDGSEDARLN…EIPLFGRAAR (118 aa).

The protein belongs to the SMC family. MukB subfamily. As to quaternary structure, homodimerization via its hinge domain. Binds to DNA via its C-terminal region. Interacts, and probably forms a ternary complex, with MukE and MukF via its C-terminal region. The complex formation is stimulated by calcium or magnesium. Interacts with tubulin-related protein FtsZ.

It is found in the cytoplasm. The protein localises to the nucleoid. Functionally, plays a central role in chromosome condensation, segregation and cell cycle progression. Functions as a homodimer, which is essential for chromosome partition. Involved in negative DNA supercoiling in vivo, and by this means organize and compact chromosomes. May achieve or facilitate chromosome segregation by condensation DNA from both sides of a centrally located replisome during cell division. This chain is Chromosome partition protein MukB, found in Pasteurella multocida (strain Pm70).